The following is a 523-amino-acid chain: Sensory neuron membrane protein 1 (523 aa).

The Cytoplasmic segment spans residues 1 to 11 (MQLPKELKYAA). The helical transmembrane segment at 12-32 (IAGGVALFGLIFGWVLFPTIL) threads the bilayer. Over 33–458 (KSQLKKEMAL…HQLFIPKRVV (426 aa)) the chain is Extracellular. 2 N-linked (GlcNAc...) asparagine glycosylation sites follow: Asn-67 and Asn-229. 3 disulfides stabilise this stretch: Cys-268/Cys-333, Cys-297/Cys-352, and Cys-335/Cys-341. N-linked (GlcNAc...) asparagine glycosylation occurs at Asn-440. Residues 459–479 (GVLRWWVVSFGSLGAVIGIVF) traverse the membrane as a helical segment. The Cytoplasmic portion of the chain corresponds to 480–523 (HFRDHIMRLAVSGDTKVSKVTPEEPEQKDISVIGQAQEPAKVNI).

Belongs to the CD36 family. Detected in sensory neurons in the antenna.

The protein localises to the cell membrane. Its function is as follows. Plays an olfactory role that is not restricted to pheromone sensitivity. This chain is Sensory neuron membrane protein 1, found in Heliothis virescens (Tobacco budworm moth).